The primary structure comprises 396 residues: Tryptophan synthase beta chain (396 aa).

Position 88 is an N6-(pyridoxal phosphate)lysine (K88).

Belongs to the TrpB family. As to quaternary structure, tetramer of two alpha and two beta chains. Pyridoxal 5'-phosphate serves as cofactor.

It catalyses the reaction (1S,2R)-1-C-(indol-3-yl)glycerol 3-phosphate + L-serine = D-glyceraldehyde 3-phosphate + L-tryptophan + H2O. The protein operates within amino-acid biosynthesis; L-tryptophan biosynthesis; L-tryptophan from chorismate: step 5/5. The beta subunit is responsible for the synthesis of L-tryptophan from indole and L-serine. The protein is Tryptophan synthase beta chain of Shewanella oneidensis (strain ATCC 700550 / JCM 31522 / CIP 106686 / LMG 19005 / NCIMB 14063 / MR-1).